The sequence spans 504 residues: Histidine ammonia-lyase (504 aa).

The 5-imidazolinone (Ala-Gly) cross-link spans 142-144; the sequence is ASG. The residue at position 143 (S143) is a 2,3-didehydroalanine (Ser).

This sequence belongs to the PAL/histidase family. Post-translationally, contains an active site 4-methylidene-imidazol-5-one (MIO), which is formed autocatalytically by cyclization and dehydration of residues Ala-Ser-Gly.

Its subcellular location is the cytoplasm. The catalysed reaction is L-histidine = trans-urocanate + NH4(+). It participates in amino-acid degradation; L-histidine degradation into L-glutamate; N-formimidoyl-L-glutamate from L-histidine: step 1/3. This chain is Histidine ammonia-lyase, found in Staphylococcus aureus (strain bovine RF122 / ET3-1).